Consider the following 175-residue polypeptide: Large ribosomal subunit protein uL18 (175 aa).

Belongs to the universal ribosomal protein uL18 family. As to quaternary structure, part of the 50S ribosomal subunit. Contacts the 5S and 23S rRNAs.

Functionally, this is one of the proteins that bind and probably mediate the attachment of the 5S RNA into the large ribosomal subunit, where it forms part of the central protuberance. This is Large ribosomal subunit protein uL18 from Methanoculleus marisnigri (strain ATCC 35101 / DSM 1498 / JR1).